The sequence spans 98 residues: Large ribosomal subunit protein uL23 (98 aa).

This sequence belongs to the universal ribosomal protein uL23 family. In terms of assembly, part of the 50S ribosomal subunit. Contacts protein L29, and trigger factor when it is bound to the ribosome.

Its function is as follows. One of the early assembly proteins it binds 23S rRNA. One of the proteins that surrounds the polypeptide exit tunnel on the outside of the ribosome. Forms the main docking site for trigger factor binding to the ribosome. The protein is Large ribosomal subunit protein uL23 of Nitrobacter hamburgensis (strain DSM 10229 / NCIMB 13809 / X14).